The sequence spans 482 residues: MLSQNQAEEAIVTNMNETEQEGGSSLEEIAEDQSMFNFKSFLWHGGSVWDAWFSCASNQVAQVLLTLPYSFSQLGMVSGIVFQIFYGLIGSWTAYLISVLYVEYRARKEKENVNFKNHVIQWFEVLDGLLGRYWKALGLAFNCTFLLFGSVIQLIACASNIYYINDKLDKRTWTYIFGACCATTVFIPSFHNYRIWSFLGLGMTTYTAWYMAIAAIVNGQIENVVHSGPTKLVLYFTGATNILYTFGGHAVTVEIMHAMWKPQKFKYIYFLATLYVFTLTIPSAVAVYWAFGDELLNHSNAFSLLPKNGFRDAAVILMLIHQFITFGFACTPLYFVWEKVIGMHDTKSICLRALVRLPVVIPIWFLAIIFPFFGPINSAVGALLVTFTVYIIPALAHMLTYRTASARKNAVEKPPSFLPSWTAVYVLNAFIVVWVLVVGFGFGGWASMTNFIRQIDTFGLFAKCYQCKPPTPPQAPSPHARH.

Topologically, residues 1-59 (MLSQNQAEEAIVTNMNETEQEGGSSLEEIAEDQSMFNFKSFLWHGGSVWDAWFSCASNQ) are cytoplasmic. The helical transmembrane segment at 60 to 77 (VAQVLLTLPYSFSQLGMV) threads the bilayer. Residues 78–79 (SG) are Extracellular-facing. The chain crosses the membrane as a helical span at residues 80 to 100 (IVFQIFYGLIGSWTAYLISVL). Residues 101–135 (YVEYRARKEKENVNFKNHVIQWFEVLDGLLGRYWK) are Cytoplasmic-facing. The chain crosses the membrane as a helical span at residues 136 to 156 (ALGLAFNCTFLLFGSVIQLIA). The Extracellular portion of the chain corresponds to 157–172 (CASNIYYINDKLDKRT). The chain crosses the membrane as a helical span at residues 173 to 193 (WTYIFGACCATTVFIPSFHNY). The Cytoplasmic segment spans residues 194–196 (RIW). A helical membrane pass occupies residues 197–217 (SFLGLGMTTYTAWYMAIAAIV). Topologically, residues 218-232 (NGQIENVVHSGPTKL) are extracellular. Residues 233–253 (VLYFTGATNILYTFGGHAVTV) form a helical membrane-spanning segment. The Cytoplasmic portion of the chain corresponds to 254–266 (EIMHAMWKPQKFK). Residues 267-287 (YIYFLATLYVFTLTIPSAVAV) form a helical membrane-spanning segment. The Extracellular portion of the chain corresponds to 288-314 (YWAFGDELLNHSNAFSLLPKNGFRDAA). A glycan (N-linked (GlcNAc...) asparagine) is linked at Asn-297. A helical transmembrane segment spans residues 315–335 (VILMLIHQFITFGFACTPLYF). Over 336–356 (VWEKVIGMHDTKSICLRALVR) the chain is Cytoplasmic. The chain crosses the membrane as a helical span at residues 357–377 (LPVVIPIWFLAIIFPFFGPIN). A topological domain (extracellular) is located at residue Ser-378. Residues 379 to 399 (AVGALLVTFTVYIIPALAHML) traverse the membrane as a helical segment. Over 400–422 (TYRTASARKNAVEKPPSFLPSWT) the chain is Cytoplasmic. The chain crosses the membrane as a helical span at residues 423 to 443 (AVYVLNAFIVVWVLVVGFGFG). At 444-482 (GWASMTNFIRQIDTFGLFAKCYQCKPPTPPQAPSPHARH) the chain is on the extracellular side.

This sequence belongs to the amino acid/polyamine transporter 2 family. Amino acid/auxin permease (AAAP) (TC 2.A.18.1) subfamily. In terms of tissue distribution, shoots and roots of nodulating plants, at low levels.

The protein resides in the cell membrane. In terms of biological role, carrier protein involved in proton-driven auxin influx. Mediates the formation of auxin gradient from developing leaves (site of auxin biosynthesis) to tips by contributing to the loading of auxin in vascular tissues and facilitating acropetal (base to tip) auxin transport within inner tissues of the root apex, and basipetal (tip to base) auxin transport within outer tissues of the root apex. May be involved in lateral roots and nodules formation. The protein is Auxin transporter-like protein 4 (LAX4) of Medicago truncatula (Barrel medic).